A 430-amino-acid chain; its full sequence is Enolase (430 aa).

Glutamine 163 is a (2R)-2-phosphoglycerate binding site. The active-site Proton donor is the glutamate 205. Aspartate 242, glutamate 287, and aspartate 314 together coordinate Mg(2+). Lysine 339, arginine 368, serine 369, and lysine 390 together coordinate (2R)-2-phosphoglycerate. The Proton acceptor role is filled by lysine 339.

Belongs to the enolase family. Mg(2+) is required as a cofactor.

The protein localises to the cytoplasm. It localises to the secreted. Its subcellular location is the cell surface. The enzyme catalyses (2R)-2-phosphoglycerate = phosphoenolpyruvate + H2O. Its pathway is carbohydrate degradation; glycolysis; pyruvate from D-glyceraldehyde 3-phosphate: step 4/5. In terms of biological role, catalyzes the reversible conversion of 2-phosphoglycerate (2-PG) into phosphoenolpyruvate (PEP). It is essential for the degradation of carbohydrates via glycolysis. This is Enolase from Geobacillus kaustophilus (strain HTA426).